A 245-amino-acid polypeptide reads, in one-letter code: Polyhedrin (245 aa).

It belongs to the polyhedrin family.

Major component of the virus occlusion bodies, which are large proteinaceous structures (polyhedra), that protect the virus from the outside environment for extended periods until they are ingested by insect larvae. This Bombyx mori nuclear polyhedrosis virus (BmNPV) protein is Polyhedrin (PH).